The primary structure comprises 271 residues: Sorting nexin-11 (271 aa).

A PX domain is found at 16–132; the sequence is VITVRVQDPR…HLFLQSQLSV (117 aa). Arg-59, Lys-85, and Arg-99 together coordinate a 1,2-diacyl-sn-glycero-3-phospho-(1D-myo-inositol-3-phosphate). Residues 135–139 are important for membrane trafficking; it reads IEACV. Residues 185–271 form a disordered region; the sequence is PRSGRRSSPS…PTQLDTAWDK (87 aa). Residues 213-230 are compositionally biased toward low complexity; sequence SEGPSSESPTLLPSSSLP.

The protein belongs to the sorting nexin family. Monomer. Interacts with TRPV3; this interaction promotes TRPV3 trafficking from the cell membrane to lysosome for degradation.

The protein localises to the cell membrane. It is found in the endosome. Its subcellular location is the cytoplasm. Its function is as follows. Phosphoinositide-binding protein involved in protein sorting and membrane trafficking in endosomes. Regulates the levels of TRPV3 by promoting its trafficking from the cell membrane to lysosome for degradation. The chain is Sorting nexin-11 (Snx11) from Mus musculus (Mouse).